Consider the following 1439-residue polypeptide: MKQGQGAHLSGQRIGHHPTAQMNPGDGDGNGRHQVASGHASADPELMNLRIRMTNRLIWELLSREPKLQTRPRKLVSDLAKRFEAVIYKKNPNKAAYYSILNGEIFPHLQHALSTHMAQHQQGQQMLQQLTSSSSYGTTIPIPDVVQNASGNTRALYEMDNTSGPMSNGHHHFSANFPLHSTTKGASLEMSAVSMQEGKITHMIPTPGSSNQQSLPGNFHYSTGTGYLNGKSNVMAQMQEQQAPFASKINCCPVQRDLGGYAGSGVHSDILNNSSPYGVSEAHMIDGMGLHRSNVQVINRTVVPETFINPSPYGISPNKPLQRHVNPSTRSTPTPADIAASTSFNGTGSSALSTTSYLDMTTVNSLPKSRMDSGLIMSQPTIQSFQTEYYIQTEGLDLQEKISLEQLHQQVNQLHLIQPHSQYAQNQCSLKLQQQNSLHHLVMSRGNVLTQCHLGSDHAEKLLDKRNQLHSELVSSQINEHVGLTNLQGHYEQTQYHDNYKKGQMSASSQNLGIPAPHDLLPPQQQFDDGSYRLSCFLKETYTKPLQPHCKSKPMKEVIMTSLLSGKIQDGFCQKKMARDREHHPIISGWHSAGCAATSFGSEEVMENTKQYHAQARWLLFLFHAKSCTSPPGSCKSSYCDRVRELVVHLTDCQIKDCSYRHCRESKMVSDHYKNCINEHCHVCCKAKEMLRRSSELAHKQNPAEPILITQHNMNQRSADRVHGDRMDIDQAVETFDDQPPAAKRPKLQLVSPDASENVPVCQKNPGFMLQEAHPRQLDQNKKMVPDQEVDVGLDIRHPQVTLVSCHGSDEKIGAAQNTVIPGALNKIHCHVQQETVVADKESVTVVDVKKKTGSVDVTISKTGKPKVKGVSLMELFTPEQIHEHINSLRQWIGQWVQCDKCECWQHQICALFNARRNDVEEAEYTCFKCYIEEFKRGLRMPLPESVVRGAKDLPRTLLSDHIEERLFKRLREERQERANKLKTSLDEVPGADGLVVRVVSSVDKKLEVKPHFFKILQEDNYPAEFPYKSKAILLFQKIEGVEVCLFGMYVQEYGAECKFPNQRRVYLSYLDSVKYFRPDIETVSGQALRTYVYHEILIGYLEYYKQRGFTSCYIWACPPVKGEDYILYCHPEIQKTPKSDKLRQWYLSMLQKAIKENIVVELTNLYDQFFVTAKECKIKVSAARLPYFDGDYWPGAAEDIINQLQLEGDGKLLKKGRVNKIITKRALKAAGHTDLSGNASKEAMLMQKLGEIICPIKDDLIMVHLQYSCSHCCTFMVSGRRWVCNECKSFYICDRCYNAEQRLEEKERHPSNSKCLHILHPVEIVGVSEDTKDRDIILENEIFDTRQAFLSFCQGYHYQYDTLRRAKHSTMMMLYHLHNPTGPAFVATCNVCNCDIENGQGWDFKSFERKQNQLSESRRMASVNERVRQRVAEVTRHE.

Disordered regions lie at residues 1-43 (MKQG…ASAD) and 313-335 (YGIS…TPTP). Polar residues predominate over residues 325–335 (VNPSTRSTPTP). A TAZ-type zinc finger spans residues 607–687 (ENTKQYHAQA…NEHCHVCCKA (81 aa)). The PHD-type; degenerate zinc-finger motif lies at 827–933 (KIHCHVQQET…EYTCFKCYIE (107 aa)). Residues 948–1383 (VRGAKDLPRT…MLYHLHNPTG (436 aa)) enclose the CBP/p300-type HAT domain. Residues 964 to 989 (EERLFKRLREERQERANKLKTSLDEV) adopt a coiled-coil conformation. Residues 1071–1073 (LDS), 1090–1091 (RT), and W1146 contribute to the acetyl-CoA site. A ZZ-type zinc finger spans residues 1265 to 1328 (HLQYSCSHCC…ILHPVEIVGV (64 aa)). Zn(2+) is bound by residues C1270, C1273, C1285, C1288, C1294, C1297, H1310, and H1318.

The protein resides in the nucleus. The catalysed reaction is L-lysyl-[protein] + acetyl-CoA = N(6)-acetyl-L-lysyl-[protein] + CoA + H(+). In terms of biological role, acetyltransferase enzyme. Acetylates histones, giving a specific tag for transcriptional activation. This chain is Probable histone acetyltransferase HAC-like 2, found in Oryza sativa subsp. japonica (Rice).